The chain runs to 392 residues: Phosphoglycerate kinase (392 aa).

Substrate is bound by residues aspartate 21–asparagine 23, arginine 36, histidine 59–arginine 62, arginine 118, and arginine 151. ATP contacts are provided by residues lysine 201, glycine 292, glutamate 323, and glycine 349–serine 352.

Belongs to the phosphoglycerate kinase family. Monomer.

Its subcellular location is the cytoplasm. It catalyses the reaction (2R)-3-phosphoglycerate + ATP = (2R)-3-phospho-glyceroyl phosphate + ADP. The protein operates within carbohydrate degradation; glycolysis; pyruvate from D-glyceraldehyde 3-phosphate: step 2/5. The chain is Phosphoglycerate kinase from Borrelia turicatae (strain 91E135).